Reading from the N-terminus, the 444-residue chain is MLVATQSLLLLSFICTLVTPPGLACGPGRGIGKRRHPKKLTPLAYKQFIPNVAEKTLGASGRYEGKITRNSDCFKELTPNYNPDIMFKDEESTGADRLMTQRCKDKLNALAISVMNQWPGVKLRVTEGWDEDGHHLEESLHYEGRAVDITTSDRDRSKYGMLGRLAVEAGFDWVYYESKAHIHCSVKAENSVAAKSGGCFPAGARVMVEFGGTKAVKDLRPGDRVLSSDPQGNLLYSDFLMFIDQERDVKKLFYVIETSQRKIRLTAAHLLFVAQTKVNGTRSFKSVFASNIQPGDLIYTADPKTMTLKAVKVEKVDLEEDTGAYAPLTAHGTVVIDQVLASCYAVIEEHTWAHLAFAPLRFGMSLSSYIYPRDSSPPSGLQPHHQVDLQSHHQVDLQSHHQVDLQSHHQLEGIHWYSQLLYQIGTWLLDSNSLHPLGMATKSS.

The signal sequence occupies residues 1–24 (MLVATQSLLLLSFICTLVTPPGLA). The N-palmitoyl cysteine moiety is linked to residue Cys25. The short motif at 33–39 (KRRHPKK) is the Cardin-Weintraub element. Residues Glu90, Glu91, Asp96, Thr126, Glu127, Asp130, and Asp132 each contribute to the Ca(2+) site. Zn(2+)-binding residues include His141, Asp148, and His183. Residue Gly198 is the site of Cholesterol glycine ester attachment. A run of 3 repeats spans residues 386–393 (QVDLQSHH), 394–401 (QVDLQSHH), and 403–409 (VDLQSHH). Positions 386 to 409 (QVDLQSHHQVDLQSHHQVDLQSHH) are 3 X 8 AA tandem repeats of Q-V-D-L-Q-S-H-H.

It belongs to the hedgehog family. In terms of assembly, interacts with HHATL/GUP1 which negatively regulates HHAT-mediated palmitoylation of the SHH N-terminus. Interacts with BOC and CDON. Interacts with HHIP. Interacts with DISP1 via its cholesterol anchor. Interacts with SCUBE2. Multimer. The C-terminal domain displays an autoproteolysis activity and a cholesterol transferase activity. Both activities result in the cleavage of the full-length protein and covalent attachment of a cholesterol moiety to the C-terminal of the newly generated N-terminal fragment (ShhN). Cholesterylation is required for the sonic hedgehog protein N-product targeting to lipid rafts and multimerization. ShhN is the active species in both local and long-range signaling, whereas the C-product (ShhC) is degraded in the reticulum endoplasmic. Post-translationally, N-palmitoylation by HHAT of ShhN is required for sonic hedgehog protein N-product multimerization and full activity. It is a prerequisite for the membrane-proximal positioning and the subsequent shedding of this N-terminal peptide. In terms of processing, the lipidated N- and C-terminal peptides of ShhNp can be cleaved (shedding). The N-terminal palmitoylated peptide is cleaved at the Cardin-Weintraub (CW) motif site. The cleavage reduced the interactions with heparan sulfate. The cleavage is enhanced by SCUBE2. Strongly expressed in notochord and neural floor plate during embryogenesis. In tadpole, high expression is observed in pancreas/stomach, moderate expression in tail, and low expression in intestine, brain, and hind limb.

It localises to the endoplasmic reticulum membrane. It is found in the golgi apparatus membrane. The protein localises to the cell membrane. The catalysed reaction is glycyl-L-cysteinyl-[protein] + cholesterol + H(+) = [protein]-C-terminal glycyl cholesterol ester + N-terminal L-cysteinyl-[protein]. In terms of biological role, the C-terminal part of the sonic hedgehog protein precursor displays an autoproteolysis and a cholesterol transferase activity. Both activities result in the cleavage of the full-length protein into two parts (ShhN and ShhC) followed by the covalent attachment of a cholesterol moiety to the C-terminal of the newly generated ShhN. Both activities occur in the endoplasmic reticulum. Once cleaved, ShhC is degraded in the endoplasmic reticulum. Functionally, the dually lipidated sonic hedgehog protein N-product (ShhNp) is a morphogen which is essential for a variety of patterning events during development. Induces ventral cell fate in the neural tube and somites. Involved in the patterning of the anterior-posterior axis of the developing limb bud. Essential for axon guidance. Binds to the patched (PTCH1) receptor, which functions in association with smoothened (SMO), to activate the transcription of target genes. In the absence of SHH, PTCH1 represses the constitutive signaling activity of SMO. The protein is Sonic hedgehog protein of Xenopus laevis (African clawed frog).